Consider the following 429-residue polypeptide: Serine hydroxymethyltransferase (429 aa).

Residues L126 and 130 to 132 (GHL) contribute to the (6S)-5,6,7,8-tetrahydrofolate site. Position 235 is an N6-(pyridoxal phosphate)lysine (K235). 359–361 (SPF) is a binding site for (6S)-5,6,7,8-tetrahydrofolate.

This sequence belongs to the SHMT family. As to quaternary structure, homodimer. Pyridoxal 5'-phosphate is required as a cofactor.

The protein localises to the cytoplasm. It carries out the reaction (6R)-5,10-methylene-5,6,7,8-tetrahydrofolate + glycine + H2O = (6S)-5,6,7,8-tetrahydrofolate + L-serine. The protein operates within one-carbon metabolism; tetrahydrofolate interconversion. It functions in the pathway amino-acid biosynthesis; glycine biosynthesis; glycine from L-serine: step 1/1. Functionally, catalyzes the reversible interconversion of serine and glycine with tetrahydrofolate (THF) serving as the one-carbon carrier. This reaction serves as the major source of one-carbon groups required for the biosynthesis of purines, thymidylate, methionine, and other important biomolecules. Also exhibits THF-independent aldolase activity toward beta-hydroxyamino acids, producing glycine and aldehydes, via a retro-aldol mechanism. The sequence is that of Serine hydroxymethyltransferase from Synechococcus sp. (strain CC9311).